We begin with the raw amino-acid sequence, 133 residues long: Small ribosomal subunit protein uS19 (133 aa).

The protein belongs to the universal ribosomal protein uS19 family.

Functionally, protein S19 forms a complex with S13 that binds strongly to the 16S ribosomal RNA. This Thermococcus onnurineus (strain NA1) protein is Small ribosomal subunit protein uS19.